The following is a 355-amino-acid chain: Transcription factor TGAL9 (355 aa).

2 disordered regions span residues 83-104 (FPSQ…MAAI) and 118-188 (GSSK…DAKT). Residues 118 to 134 (GSSKRPPAAAAAGGQPS) are compositionally biased toward low complexity. A compositionally biased stretch (polar residues) spans 135-144 (RLNNPADQPS). 2 stretches are compositionally biased toward basic and acidic residues: residues 148-159 (KDGKAAVVKKEG) and 176-188 (SEHE…DAKT). The bZIP domain occupies 185–230 (DAKTLRRLAQNREAARKSRLRKKAYIQNLETSRIRLSQLEQELVQR). Positions 187–207 (KTLRRLAQNREAARKSRLRKK) are basic motif. The leucine-zipper stretch occupies residues 213–227 (LETSRIRLSQLEQEL). In terms of domain architecture, DOG1 spans 254-355 (AAWFDGEYAR…RPSELIKVST (102 aa)).

The protein belongs to the bZIP family. As to quaternary structure, interacts with NPR5/NH4, NH5.1 and NH5.2.

It is found in the nucleus. In terms of biological role, transcriptional regulator involved in defense response. This Oryza sativa subsp. japonica (Rice) protein is Transcription factor TGAL9.